The chain runs to 336 residues: MAELKLGYKASAEQFAPRELVELAVAAEAHGMDSATVSDHFQPWRHEGGHAPFSLAWMTAVGERTTRITLGTSVLTPTFRYNPAVVAQAFATMACLYPGRIFLGVGTGEALNEIATGYQGEWPEFKERFARLRESVRLMRELWRGDRVDFDGEYYRLKGASIYDVPDGGVPIYIAAGGPAVAKYAGRAGDGFICTSGKGEELYKDKLIPAVKEGAAINDRNVDDIDKMIEIKISYDPDPELALENTRFWAPLSLTAEQKHSIDDPIEMEKAADALPIEQVAKRWIVASDPDEAVAKVKDYVDWGLNHLVFHAPGHDQRRFLELFEKDLAPRLRRLG.

Position 39 (aspartate 39) interacts with coenzyme F420-(gamma-Glu)n. Histidine 40 (proton donor) is an active-site residue. Residues threonine 76 and 107 to 108 each bind coenzyme F420-(gamma-Glu)n; that span reads TG. The active-site Proton acceptor is the glutamate 109. Coenzyme F420-(gamma-Glu)n is bound by residues asparagine 112, 177-178, and 180-181; these read GG and AV. Substrate-binding residues include threonine 195, lysine 198, lysine 259, and arginine 283.

Belongs to the F420-dependent glucose-6-phosphate dehydrogenase family. As to quaternary structure, homodimer.

It carries out the reaction oxidized coenzyme F420-(gamma-L-Glu)(n) + D-glucose 6-phosphate + H(+) = 6-phospho-D-glucono-1,5-lactone + reduced coenzyme F420-(gamma-L-Glu)(n). Its function is as follows. Catalyzes the coenzyme F420-dependent oxidation of glucose 6-phosphate (G6P) to 6-phosphogluconolactone. Appears to have a role in resistance to oxidative stress, via its consumption of G6P that serves as a source of reducing power to combat oxidative stress in mycobacteria. The chain is F420-dependent glucose-6-phosphate dehydrogenase from Mycobacterium avium (strain 104).